Here is a 648-residue protein sequence, read N- to C-terminus: ATP-dependent zinc metalloprotease FtsH 4 (648 aa).

Residues 1–6 lie on the Cytoplasmic side of the membrane; sequence MKQSHK. Residues 7–27 traverse the membrane as a helical segment; it reads TLLLWVLLIMMFLAIWQFLSP. The Periplasmic portion of the chain corresponds to 28–111; the sequence is DSRPATQVAF…VFFEKEDTSP (84 aa). The helical transmembrane segment at 112-132 threads the bilayer; the sequence is FWPGAIMYLLPTVFLLVMFYL. At 133-648 the chain is on the cytoplasmic side; it reads FMRQLQAGGG…FGTPKPAPST (516 aa). An ATP-binding site is contributed by 205–212; the sequence is GPPGTGKT. Residue His427 coordinates Zn(2+). Glu428 is an active-site residue. Positions 431 and 504 each coordinate Zn(2+). Residues 622 to 648 form a disordered region; it reads YSDRDRAAKEKRRAASIFGTPKPAPST.

In the central section; belongs to the AAA ATPase family. It in the C-terminal section; belongs to the peptidase M41 family. Homohexamer. Zn(2+) serves as cofactor.

It localises to the cell inner membrane. Acts as a processive, ATP-dependent zinc metallopeptidase for both cytoplasmic and membrane proteins. Plays a role in the quality control of integral membrane proteins. This Sorangium cellulosum (strain So ce56) (Polyangium cellulosum (strain So ce56)) protein is ATP-dependent zinc metalloprotease FtsH 4.